We begin with the raw amino-acid sequence, 341 residues long: Solute carrier family 25 member 43 (341 aa).

3 Solcar repeats span residues 11 to 101 (TGGQ…TDDL), 105 to 185 (SQWS…LLVY), and 200 to 298 (SLPQ…LYQN). Transmembrane regions (helical) follow at residues 16–36 (LLCA…LELA), 68–88 (LWKG…VQLA), 110–130 (IMAG…TDLI), 166–186 (GVSL…LVYM), 205–225 (FANV…FETV), and 262–282 (VLGL…YFGI).

It belongs to the mitochondrial carrier (TC 2.A.29) family.

Its subcellular location is the mitochondrion inner membrane. In Homo sapiens (Human), this protein is Solute carrier family 25 member 43 (SLC25A43).